The primary structure comprises 273 residues: NH(3)-dependent NAD(+) synthetase (273 aa).

47-54 (GISGGQDS) serves as a coordination point for ATP. D53 contributes to the Mg(2+) binding site. R139 lines the deamido-NAD(+) pocket. ATP is bound at residue T159. E164 is a binding site for Mg(2+). The deamido-NAD(+) site is built by K172 and D179. ATP contacts are provided by K188 and T210. Deamido-NAD(+) is bound at residue 259–260 (HK).

Belongs to the NAD synthetase family. Homodimer.

It carries out the reaction deamido-NAD(+) + NH4(+) + ATP = AMP + diphosphate + NAD(+) + H(+). It functions in the pathway cofactor biosynthesis; NAD(+) biosynthesis; NAD(+) from deamido-NAD(+) (ammonia route): step 1/1. In terms of biological role, catalyzes the ATP-dependent amidation of deamido-NAD to form NAD. Uses ammonia as a nitrogen source. In Staphylococcus saprophyticus subsp. saprophyticus (strain ATCC 15305 / DSM 20229 / NCIMB 8711 / NCTC 7292 / S-41), this protein is NH(3)-dependent NAD(+) synthetase.